The chain runs to 1573 residues: Mediator of RNA polymerase II transcription subunit 1 (1573 aa).

The short motif at 588–592 is the LXXLL motif 1 element; that stretch reads LTSLL. 3 disordered regions span residues 595 to 691, 774 to 883, and 928 to 1564; these read TSNS…EDDF, SKLP…FKDF, and LGGP…GDDD. Positions 606–617 are enriched in pro residues; that stretch reads PTPPQHTPPPAS. Residues 629 to 633 carry the LXXLL motif 2 motif; that stretch reads LMNLL. Residues 651-668 are compositionally biased toward polar residues; sequence ERQNSSGSPRTELGSSAS. Over residues 678 to 691 the composition is skewed to basic and acidic residues; sequence TGTEKMKNQTEDDF. 3 stretches are compositionally biased toward polar residues: residues 791-804, 835-864, and 934-944; these read RDSS…STLF, GSPN…QSGF, and QETQSRSQSPL. The segment covering 949–961 has biased composition (basic and acidic residues); it reads LGKDRPQKQKVKE. The span at 963–973 shows a compositional bias: gly residues; that stretch reads GNGGGAGGGLS. Composition is skewed to low complexity over residues 1025-1038, 1053-1085, 1092-1116, 1124-1143, and 1155-1164; these read PTST…GTSG, KITI…SSSS, SSLS…MKIG, SGQS…SMGK, and SSNVNNSSGS. A compositionally biased stretch (polar residues) spans 1176 to 1193; the sequence is MNPSLSKPNISPSHSRPS. Residues 1226-1277 are compositionally biased toward low complexity; sequence LSGSGSNSTTKSSSGLVSSGSLTQKPNSSSSSSSSSSSSSSSSSSSSSSFSS. Positions 1278–1290 are enriched in polar residues; that stretch reads GVSQNLHSSSKGK. Residues 1350 to 1362 are compositionally biased toward basic and acidic residues; the sequence is PTKREKGEKDKSK. Polar residues-rich tracts occupy residues 1420–1435 and 1443–1457; these read SQMQ…SGST and PSHN…QALD. Positions 1461-1471 are enriched in low complexity; that stretch reads ESGSSSIAEKS. A compositionally biased stretch (basic residues) spans 1496-1505; that stretch reads KHKKHKKEKK. Positions 1506–1518 are enriched in basic and acidic residues; the sequence is RLKDKDRDREKKK.

This sequence belongs to the Mediator complex subunit 1 family. Component of the Mediator complex.

It is found in the nucleus. Functionally, component of the Mediator complex, a coactivator involved in the regulated transcription of nearly all RNA polymerase II-dependent genes. Mediator functions as a bridge to convey information from gene-specific regulatory proteins to the basal RNA polymerase II transcription machinery. Mediator is recruited to promoters by direct interactions with regulatory proteins and serves as a scaffold for the assembly of a functional preinitiation complex with RNA polymerase II and the general transcription factors. The polypeptide is Mediator of RNA polymerase II transcription subunit 1 (med1) (Xenopus tropicalis (Western clawed frog)).